The sequence spans 169 residues: Glycine-rich RNA-binding protein 8 (169 aa).

The RRM domain maps to 6–84 (YRCFVGGLAW…RVITVNEAQS (79 aa)). Arginine 47 bears the ADP-ribosylarginine; by HopU1 mark. A disordered region spans residues 80-99 (NEAQSRGSGGGGGGRGGSGG). The segment covering 86–99 (GSGGGGGGRGGSGG) has biased composition (gly residues). Residues 86–168 (GSGGGGGGRG…GGSYGGGGGG (83 aa)) are glycine-rich (GR) required for cell-to-cell movement. Residues 95 to 143 (GGSGGGYRSGGGGGYSGGGGGGYSGGGGGGYERRSGGYGSGGGGGGRGY) are nuclear targeting sequence (M9). Position 103 is a phosphoserine (serine 103). The segment at 130-169 (GGYGSGGGGGGRGYGGGGRREGGGYGGGDGGSYGGGGGGW) is disordered.

It belongs to the GR-RBP family. As to quaternary structure, interacts with TRN1. Binds to small phloem-mobile single-stranded RNAs (ss-sRNA, e.g. small interfering RNA (siRNA) and microRNA (miRNA)) in the phloeme exudate, including viral-derived sRNA (vsiRNA). In terms of processing, ADP-ribosylated by the Pseudomonas syringae type III effector HopU1. ADP-ribosylation reduces the ability of the protein to bind RNA. In terms of tissue distribution, ubiquitous.

The protein resides in the cytoplasm. It localises to the nucleus. It is found in the secreted. Functionally, plays a role in RNA transcription or processing during stress. Binds RNAs and DNAs sequence with a preference to single-stranded nucleic acids. Involved in mRNA alternative splicing of numerous targets by modulating splice site selection. Negatively regulates the circadian oscillations of its own transcript as well as RBG7 transcript. Forms an interlocked post-transcriptional negative feedback loop with the RBG7 autoregulatory circuit. Both proteins negatively autoregulate and reciprocally crossregulate by binding to their pre-mRNAs and promoting unproductive splicing coupled to degradation via the NMD pathway. Target of the Pseudomonas syringae type III effector HopU1. Mediates cell-to-cell trafficking of RNA interference (RNAi) signals (small RNAs (sRNA), e.g. small interfering RNA (siRNA) and microRNA (miRNA)) which regulate growth and development, as well as responses to environmental inputs, including pathogen attack; can compromise zucchini yellow mosaic virus (ZYMV) and tobacco rattle virus (TRV) infections at the early stage. The chain is Glycine-rich RNA-binding protein 8 from Arabidopsis thaliana (Mouse-ear cress).